Here is a 124-residue protein sequence, read N- to C-terminus: MSRGNAAAAKGKKKGVSFTIDCSKPVDDKIMEIASLEKFLQERIKVGGKAGALGDSVSITREKSKITVTADGQFSKRYLKYLTKKYLKKHNVRDWLRVIAANKDRNLYELRYFNIAENEAEEED.

The protein belongs to the eukaryotic ribosomal protein eL22 family.

In Arabidopsis thaliana (Mouse-ear cress), this protein is Large ribosomal subunit protein eL22y (RPL22C).